We begin with the raw amino-acid sequence, 439 residues long: Histidinol dehydrogenase (439 aa).

NAD(+)-binding residues include tyrosine 127, glutamine 185, and asparagine 208. Substrate contacts are provided by serine 234, glutamine 256, and histidine 259. The Zn(2+) site is built by glutamine 256 and histidine 259. Catalysis depends on proton acceptor residues glutamate 323 and histidine 324. Substrate-binding residues include histidine 324, aspartate 357, glutamate 411, and histidine 416. Zn(2+) is bound at residue aspartate 357. Residue histidine 416 coordinates Zn(2+).

The protein belongs to the histidinol dehydrogenase family. Requires Zn(2+) as cofactor.

The enzyme catalyses L-histidinol + 2 NAD(+) + H2O = L-histidine + 2 NADH + 3 H(+). The protein operates within amino-acid biosynthesis; L-histidine biosynthesis; L-histidine from 5-phospho-alpha-D-ribose 1-diphosphate: step 9/9. In terms of biological role, catalyzes the sequential NAD-dependent oxidations of L-histidinol to L-histidinaldehyde and then to L-histidine. The sequence is that of Histidinol dehydrogenase from Aliivibrio fischeri (strain ATCC 700601 / ES114) (Vibrio fischeri).